We begin with the raw amino-acid sequence, 278 residues long: Asnovolin E/Chermesin D methyltransferase nvfJ (278 aa).

Residues 125 to 126 (DL), 152 to 153 (NI), and 153 to 154 (IL) each bind S-adenosyl-L-methionine.

It belongs to the class I-like SAM-binding methyltransferase superfamily. Homodimer.

It catalyses the reaction chermesin D + S-adenosyl-L-methionine = chermesin D methyl ester + S-adenosyl-L-homocysteine. It carries out the reaction asnovolin I + S-adenosyl-L-methionine = asnovolin K + S-adenosyl-L-homocysteine. It participates in secondary metabolite biosynthesis; terpenoid biosynthesis. Functionally, methyltransferase; part of the gene cluster that mediates the biosynthesis of novofumigatonin, a heavily oxygenated meroterpenoid containing a unique orthoester moiety. The first step of the pathway is the synthesis of 3,5-dimethylorsellinic acid (DMOA) by the polyketide synthase nvfA via condensation of one acetyl-CoA starter unit with 3 malonyl-CoA units and 2 methylations. DMOA is then converted to farnesyl-DMOA by the farnesyltransferase nvfB. Epoxydation by FAD-dependent monooxygenase nvfK, followed by a protonation-initiated cyclization catalyzed by the terpene cyclase nvfL leads to the production of asnavolin H. The short chain dehydrogenase nvfC then as a 3-OH dehydrogenase of asnovolin H to yield chemesin D. There are two branches to synthesize asnovolin A from chemesin D. In one branch, chemesin D undergoes Baeyer-Villiger oxidation by nvfH, methylation by nvfJ, and enoyl reduction by the nvfM D enoylreductase that reduces the double bond between C-5'and C-6', to form respectively asnovolin I, asnovolin K, and asnovolin A. In the other branch, the methylation precedes the Baeyer-Villiger oxidation and the enoyl reduction to yield asnovolin A via the asnovolin J intermediate. Asnovolin A is further converted to fumigatonoid A by the Fe(II)/2-oxoglutarate-dependent dioxygenase nvfI that catalyzes an endoperoxidation reaction. The alpha/beta hydrolase nvfD then acts as an epimerase that converts fumigatonoid A to its C-5' epimer, which then undergoes spontaneous or nvfD-catalyzed lactonization. The following step utilizes the ketoreductase nvfG to produce fumigatonoid B. The dioxygenase nvfE further converts fumigatonoid B into fumigatonoid C. Finally the Fe(II)/2-oxoglutarate-dependent dioxygenase nvfF catalyzes two rounds of oxidation to transform fumigatonoid C into the end product, novofumigatonin A. The protein is Asnovolin E/Chermesin D methyltransferase nvfJ of Aspergillus novofumigatus (strain IBT 16806).